The chain runs to 1027 residues: Presequence protease, mitochondrial (1027 aa).

Residues 1–22 (MIRQCRAGLRLCRALYQTSYRW) constitute a mitochondrion transit peptide. His-98 serves as a coordination point for Zn(2+). Catalysis depends on Glu-101, which acts as the Proton acceptor. Residues His-102 and Glu-199 each contribute to the Zn(2+) site. A disulfide bridge links Cys-113 with Cys-550. A disordered region spans residues 800–829 (KKERKSIRPHVVEKSSSPSSSGSEISRRAT). Residues 814–823 (SSSPSSSGSE) are compositionally biased toward low complexity.

Belongs to the peptidase M16 family. PreP subfamily. As to quaternary structure, monomer and homodimer; homodimerization is induced by binding of the substrate. Requires Zn(2+) as cofactor. Post-translationally, a disulfide bond locks the enzyme in the closed conformation preventing substrate entry into the catalytic chamber.

Its subcellular location is the mitochondrion matrix. With respect to regulation, mainly exists in a closed and catalytically competent conformation but a closed-to-open switch allows substrate entry into the catalytic chamber. Substrate binding induces closure and dimerization. A disulfide bond may lock the enzyme in a closed conformation preventing substrate entry into the catalytic chamber, participating in redox regulation of the enzyme. Inhibited by metal-chelating agents. Inhibited by nickel and zinc excess, and slightly activated by manganese. Its function is as follows. Metalloendopeptidase of the mitochondrial matrix that functions in peptide cleavage and degradation rather than in protein processing. Has an ATP-independent activity. Specifically cleaves peptides in the range of 5 to 65 residues. Shows a preference for cleavage after small polar residues and before basic residues, but without any positional preference. Degrades the transit peptides of mitochondrial proteins after their cleavage. Also degrades other unstructured peptides. This Xenopus tropicalis (Western clawed frog) protein is Presequence protease, mitochondrial (pitrm1).